Here is an 89-residue protein sequence, read N- to C-terminus: Small ribosomal subunit protein uS15 (89 aa).

Belongs to the universal ribosomal protein uS15 family. In terms of assembly, part of the 30S ribosomal subunit. Forms a bridge to the 50S subunit in the 70S ribosome, contacting the 23S rRNA.

In terms of biological role, one of the primary rRNA binding proteins, it binds directly to 16S rRNA where it helps nucleate assembly of the platform of the 30S subunit by binding and bridging several RNA helices of the 16S rRNA. Functionally, forms an intersubunit bridge (bridge B4) with the 23S rRNA of the 50S subunit in the ribosome. This chain is Small ribosomal subunit protein uS15, found in Thermodesulfovibrio yellowstonii (strain ATCC 51303 / DSM 11347 / YP87).